The primary structure comprises 467 residues: UDP-N-acetylmuramate--L-alanine ligase (467 aa).

Residue 112–118 coordinates ATP; the sequence is GTHGKTT.

The protein belongs to the MurCDEF family.

The protein resides in the cytoplasm. The enzyme catalyses UDP-N-acetyl-alpha-D-muramate + L-alanine + ATP = UDP-N-acetyl-alpha-D-muramoyl-L-alanine + ADP + phosphate + H(+). Its pathway is cell wall biogenesis; peptidoglycan biosynthesis. In terms of biological role, cell wall formation. In Paraburkholderia phytofirmans (strain DSM 17436 / LMG 22146 / PsJN) (Burkholderia phytofirmans), this protein is UDP-N-acetylmuramate--L-alanine ligase.